We begin with the raw amino-acid sequence, 262 residues long: Acyl-[acyl-carrier-protein]--UDP-N-acetylglucosamine O-acyltransferase (262 aa).

This sequence belongs to the transferase hexapeptide repeat family. LpxA subfamily. Homotrimer.

It localises to the cytoplasm. The enzyme catalyses a (3R)-hydroxyacyl-[ACP] + UDP-N-acetyl-alpha-D-glucosamine = a UDP-3-O-[(3R)-3-hydroxyacyl]-N-acetyl-alpha-D-glucosamine + holo-[ACP]. Its pathway is glycolipid biosynthesis; lipid IV(A) biosynthesis; lipid IV(A) from (3R)-3-hydroxytetradecanoyl-[acyl-carrier-protein] and UDP-N-acetyl-alpha-D-glucosamine: step 1/6. Functionally, involved in the biosynthesis of lipid A, a phosphorylated glycolipid that anchors the lipopolysaccharide to the outer membrane of the cell. In Vibrio vulnificus (strain CMCP6), this protein is Acyl-[acyl-carrier-protein]--UDP-N-acetylglucosamine O-acyltransferase.